The primary structure comprises 663 residues: Glucans biosynthesis glucosyltransferase H (663 aa).

6 consecutive transmembrane segments (helical) span residues tryptophan 64–alanine 86, leucine 101–methionine 123, leucine 413–isoleucine 435, alanine 470–leucine 492, glutamate 558–threonine 580, and leucine 584–histidine 606.

This sequence belongs to the glycosyltransferase 2 family. OpgH subfamily.

It localises to the cell inner membrane. It functions in the pathway glycan metabolism; osmoregulated periplasmic glucan (OPG) biosynthesis. Functionally, involved in the biosynthesis of osmoregulated periplasmic glucans (OPGs). The sequence is that of Glucans biosynthesis glucosyltransferase H from Caulobacter vibrioides (strain ATCC 19089 / CIP 103742 / CB 15) (Caulobacter crescentus).